We begin with the raw amino-acid sequence, 292 residues long: Protein/nucleic acid deglycase HchA (292 aa).

The span at 1–12 (MSQDVNELSKQP) shows a compositional bias: polar residues. Residues 1-23 (MSQDVNELSKQPTPDKAEDNAFF) are disordered. The active-site Nucleophile is Cys190.

The protein belongs to the peptidase C56 family. HchA subfamily.

Its subcellular location is the cytoplasm. The enzyme catalyses N(omega)-(1-hydroxy-2-oxopropyl)-L-arginyl-[protein] + H2O = lactate + L-arginyl-[protein] + H(+). It catalyses the reaction N(6)-(1-hydroxy-2-oxopropyl)-L-lysyl-[protein] + H2O = lactate + L-lysyl-[protein] + H(+). It carries out the reaction S-(1-hydroxy-2-oxopropyl)-L-cysteinyl-[protein] + H2O = lactate + L-cysteinyl-[protein] + H(+). The catalysed reaction is N(omega)-(1-hydroxy-2-oxoethyl)-L-arginyl-[protein] + H2O = L-arginyl-[protein] + glycolate + H(+). The enzyme catalyses N(6)-(1-hydroxy-2-oxoethyl)-L-lysyl-[protein] + H2O = glycolate + L-lysyl-[protein] + H(+). It catalyses the reaction S-(1-hydroxy-2-oxoethyl)-L-cysteinyl-[protein] + H2O = glycolate + L-cysteinyl-[protein] + H(+). It carries out the reaction N(2)-(1-hydroxy-2-oxopropyl)-dGTP + H2O = lactate + dGTP + H(+). The catalysed reaction is N(2)-(1-hydroxy-2-oxopropyl)-GTP + H2O = lactate + GTP + H(+). The enzyme catalyses N(2)-(1-hydroxy-2-oxopropyl)-GDP + H2O = lactate + GDP + H(+). It catalyses the reaction N(2)-(1-hydroxy-2-oxopropyl)-GMP + H2O = lactate + GMP + H(+). It carries out the reaction N(2)-(1-hydroxy-2-oxoethyl)-dGTP + H2O = dGTP + glycolate + H(+). The catalysed reaction is N(2)-(1-hydroxy-2-oxoethyl)-GTP + H2O = glycolate + GTP + H(+). The enzyme catalyses N(2)-(1-hydroxy-2-oxoethyl)-GDP + H2O = glycolate + GDP + H(+). It catalyses the reaction N(2)-(1-hydroxy-2-oxoethyl)-GMP + H2O = glycolate + GMP + H(+). It carries out the reaction an N(2)-(1-hydroxy-2-oxopropyl)-guanosine in RNA + H2O = a guanosine in RNA + lactate + H(+). The catalysed reaction is an N(2)-(1-hydroxy-2-oxopropyl)-2'-deoxyguanosine in DNA + H2O = a 2'-deoxyguanosine in DNA + lactate + H(+). The enzyme catalyses an N(2)-(1-hydroxy-2-oxoethyl)-guanosine in RNA + H2O = a guanosine in RNA + glycolate + H(+). It catalyses the reaction an N(2)-(1-hydroxy-2-oxoethyl)-2'-deoxyguanosine in DNA + H2O = a 2'-deoxyguanosine in DNA + glycolate + H(+). Protein and nucleotide deglycase that catalyzes the deglycation of the Maillard adducts formed between amino groups of proteins or nucleotides and reactive carbonyl groups of glyoxals. Thus, functions as a protein deglycase that repairs methylglyoxal- and glyoxal-glycated proteins, and releases repaired proteins and lactate or glycolate, respectively. Deglycates cysteine, arginine and lysine residues in proteins, and thus reactivates these proteins by reversing glycation by glyoxals. Acts on early glycation intermediates (hemithioacetals and aminocarbinols), preventing the formation of Schiff bases and advanced glycation endproducts (AGE). Also functions as a nucleotide deglycase able to repair glycated guanine in the free nucleotide pool (GTP, GDP, GMP, dGTP) and in DNA and RNA. Is thus involved in a major nucleotide repair system named guanine glycation repair (GG repair), dedicated to reversing methylglyoxal and glyoxal damage via nucleotide sanitization and direct nucleic acid repair. Plays an important role in protecting cells from carbonyl stress. The chain is Protein/nucleic acid deglycase HchA from Staphylococcus aureus (strain Newman).